Reading from the N-terminus, the 497-residue chain is Glycerol kinase (497 aa).

Threonine 12 contributes to the ADP binding site. ATP is bound by residues threonine 12, threonine 13, and serine 14. Threonine 12 contributes to the sn-glycerol 3-phosphate binding site. An ADP-binding site is contributed by arginine 16. Positions 82, 83, 133, and 243 each coordinate sn-glycerol 3-phosphate. Glycerol-binding residues include arginine 82, glutamate 83, tyrosine 133, aspartate 243, and glutamine 244. ADP-binding residues include threonine 265 and glycine 308. Residues threonine 265, glycine 308, glutamine 312, and glycine 409 each contribute to the ATP site. Glycine 409 contributes to the ADP binding site.

The protein belongs to the FGGY kinase family.

It carries out the reaction glycerol + ATP = sn-glycerol 3-phosphate + ADP + H(+). The protein operates within polyol metabolism; glycerol degradation via glycerol kinase pathway; sn-glycerol 3-phosphate from glycerol: step 1/1. Inhibited by fructose 1,6-bisphosphate (FBP). In terms of biological role, key enzyme in the regulation of glycerol uptake and metabolism. Catalyzes the phosphorylation of glycerol to yield sn-glycerol 3-phosphate. The protein is Glycerol kinase of Dichelobacter nodosus (strain VCS1703A).